The primary structure comprises 502 residues: Lysine--tRNA ligase (502 aa).

Residues glutamate 412 and glutamate 419 each contribute to the Mg(2+) site.

This sequence belongs to the class-II aminoacyl-tRNA synthetase family. Homodimer. Mg(2+) serves as cofactor.

It localises to the cytoplasm. The enzyme catalyses tRNA(Lys) + L-lysine + ATP = L-lysyl-tRNA(Lys) + AMP + diphosphate. In Nitrosomonas europaea (strain ATCC 19718 / CIP 103999 / KCTC 2705 / NBRC 14298), this protein is Lysine--tRNA ligase.